The primary structure comprises 205 residues: Probable GTP-binding protein EngB (205 aa).

The region spanning 27-201 (QGMEVAFAGR…QNKLNAWFSG (175 aa)) is the EngB-type G domain. Residues 35-42 (GRSNAGKS), 62-66 (GRTQL), 80-83 (DLPG), 147-150 (TKVD), and 180-182 (FSS) contribute to the GTP site. Mg(2+) contacts are provided by Ser42 and Thr64.

Belongs to the TRAFAC class TrmE-Era-EngA-EngB-Septin-like GTPase superfamily. EngB GTPase family. Mg(2+) serves as cofactor.

Functionally, necessary for normal cell division and for the maintenance of normal septation. The chain is Probable GTP-binding protein EngB from Hamiltonella defensa subsp. Acyrthosiphon pisum (strain 5AT).